The primary structure comprises 201 residues: Peptidyl-tRNA hydrolase (201 aa).

Tyr-17 lines the tRNA pocket. His-22 (proton acceptor) is an active-site residue. 3 residues coordinate tRNA: Phe-76, Asn-78, and Asn-124.

Belongs to the PTH family. In terms of assembly, monomer.

The protein resides in the cytoplasm. It carries out the reaction an N-acyl-L-alpha-aminoacyl-tRNA + H2O = an N-acyl-L-amino acid + a tRNA + H(+). Functionally, hydrolyzes ribosome-free peptidyl-tRNAs (with 1 or more amino acids incorporated), which drop off the ribosome during protein synthesis, or as a result of ribosome stalling. In terms of biological role, catalyzes the release of premature peptidyl moieties from peptidyl-tRNA molecules trapped in stalled 50S ribosomal subunits, and thus maintains levels of free tRNAs and 50S ribosomes. This chain is Peptidyl-tRNA hydrolase, found in Nitratidesulfovibrio vulgaris (strain ATCC 29579 / DSM 644 / CCUG 34227 / NCIMB 8303 / VKM B-1760 / Hildenborough) (Desulfovibrio vulgaris).